The chain runs to 76 residues: EMBRYO SURROUNDING FACTOR 1-like protein 8 (76 aa).

The signal sequence occupies residues Met1 to Cys22. Cystine bridges form between Cys38–Cys54, Cys43–Cys74, Cys52–Cys70, and Cys55–Cys63.

This sequence belongs to the MEG family. Expressed in flowers.

The chain is EMBRYO SURROUNDING FACTOR 1-like protein 8 (ESFL8) from Arabidopsis thaliana (Mouse-ear cress).